We begin with the raw amino-acid sequence, 221 residues long: 2,3-bisphosphoglycerate-dependent phosphoglycerate mutase (221 aa).

Substrate contacts are provided by residues 8-15 (RHGNSLWN), 21-22 (TG), arginine 60, 87-90 (ERHY), lysine 98, 114-115 (RR), and 174-175 (GN). Catalysis depends on histidine 9, which acts as the Tele-phosphohistidine intermediate. Glutamate 87 serves as the catalytic Proton donor/acceptor. The segment at 114 to 140 (RRGYDTPPPPLHSQADDPRYEEPPPLS) is disordered.

Belongs to the phosphoglycerate mutase family. BPG-dependent PGAM subfamily.

It carries out the reaction (2R)-2-phosphoglycerate = (2R)-3-phosphoglycerate. The protein operates within carbohydrate degradation; glycolysis; pyruvate from D-glyceraldehyde 3-phosphate: step 3/5. Catalyzes the interconversion of 2-phosphoglycerate and 3-phosphoglycerate. The protein is 2,3-bisphosphoglycerate-dependent phosphoglycerate mutase of Tropheryma whipplei (strain TW08/27) (Whipple's bacillus).